A 377-amino-acid polypeptide reads, in one-letter code: Carbonic anhydrase 1 (377 aa).

Positions 1 to 20 (MARTGALLLVALALAGCAQA) are cleaved as a signal peptide. One can recognise an Alpha-carbonic anhydrase domain in the interval 38-318 (DHWDHGLNGE…HHHRRLLHNH (281 aa)). 3 disulfides stabilise this stretch: Cys-61-Cys-264, Cys-194-Cys-198, and Cys-296-Cys-351. An N-linked (GlcNAc...) asparagine glycan is attached at Asn-101. His-112 functions as the Proton acceptor in the catalytic mechanism. N-linked (GlcNAc...) asparagine glycosylation occurs at Asn-135. Residues His-163, His-165, and His-182 each contribute to the Zn(2+) site. Residues Thr-260 and 260–261 (TT) contribute to the substrate site. Asn-297 is a glycosylation site (N-linked (GlcNAc...) asparagine).

Belongs to the alpha-carbonic anhydrase family. In terms of assembly, tetramer of two large and two small subunits linked by two disulfide bonds. The cofactor is Zn(2+).

The protein localises to the periplasm. The enzyme catalyses hydrogencarbonate + H(+) = CO2 + H2O. Functionally, reversible hydration of carbon dioxide. In Chlamydomonas reinhardtii (Chlamydomonas smithii), this protein is Carbonic anhydrase 1 (CAH1).